A 332-amino-acid polypeptide reads, in one-letter code: Ribosomal RNA small subunit methyltransferase H (332 aa).

Residues 42–44 (GGH), Asp62, Phe86, Asp105, and Gln112 each bind S-adenosyl-L-methionine.

This sequence belongs to the methyltransferase superfamily. RsmH family.

It is found in the cytoplasm. It catalyses the reaction cytidine(1402) in 16S rRNA + S-adenosyl-L-methionine = N(4)-methylcytidine(1402) in 16S rRNA + S-adenosyl-L-homocysteine + H(+). In terms of biological role, specifically methylates the N4 position of cytidine in position 1402 (C1402) of 16S rRNA. The sequence is that of Ribosomal RNA small subunit methyltransferase H from Cupriavidus pinatubonensis (strain JMP 134 / LMG 1197) (Cupriavidus necator (strain JMP 134)).